Consider the following 55-residue polypeptide: MPQLNPAPWFSIMVMTWLTLALLIQPKLLTFTTTNPPSKKPSLITKPTPWAWPWT.

The chain crosses the membrane as a helical span at residues 8–24 (PWFSIMVMTWLTLALLI). Residues 35 to 55 (NPPSKKPSLITKPTPWAWPWT) form a disordered region.

Belongs to the ATPase protein 8 family. In terms of assembly, component of the ATP synthase complex composed at least of ATP5F1A/subunit alpha, ATP5F1B/subunit beta, ATP5MC1/subunit c (homooctomer), MT-ATP6/subunit a, MT-ATP8/subunit 8, ATP5ME/subunit e, ATP5MF/subunit f, ATP5MG/subunit g, ATP5MK/subunit k, ATP5MJ/subunit j, ATP5F1C/subunit gamma, ATP5F1D/subunit delta, ATP5F1E/subunit epsilon, ATP5PF/subunit F6, ATP5PB/subunit b, ATP5PD/subunit d, ATP5PO/subunit OSCP. ATP synthase complex consists of a soluble F(1) head domain (subunits alpha(3) and beta(3)) - the catalytic core - and a membrane F(0) domain - the membrane proton channel (subunits c, a, 8, e, f, g, k and j). These two domains are linked by a central stalk (subunits gamma, delta, and epsilon) rotating inside the F1 region and a stationary peripheral stalk (subunits F6, b, d, and OSCP).

It is found in the mitochondrion membrane. In terms of biological role, subunit 8, of the mitochondrial membrane ATP synthase complex (F(1)F(0) ATP synthase or Complex V) that produces ATP from ADP in the presence of a proton gradient across the membrane which is generated by electron transport complexes of the respiratory chain. ATP synthase complex consist of a soluble F(1) head domain - the catalytic core - and a membrane F(1) domain - the membrane proton channel. These two domains are linked by a central stalk rotating inside the F(1) region and a stationary peripheral stalk. During catalysis, ATP synthesis in the catalytic domain of F(1) is coupled via a rotary mechanism of the central stalk subunits to proton translocation. In vivo, can only synthesize ATP although its ATP hydrolase activity can be activated artificially in vitro. Part of the complex F(0) domain. The sequence is that of ATP synthase F(0) complex subunit 8 from Anas platyrhynchos (Mallard).